Here is a 98-residue protein sequence, read N- to C-terminus: Small ribosomal subunit protein bS20 (98 aa).

The protein belongs to the bacterial ribosomal protein bS20 family.

Its function is as follows. Binds directly to 16S ribosomal RNA. This chain is Small ribosomal subunit protein bS20, found in Kosmotoga olearia (strain ATCC BAA-1733 / DSM 21960 / TBF 19.5.1).